A 448-amino-acid polypeptide reads, in one-letter code: Tryptophan dimethylallyltransferase 1 (448 aa).

L-tryptophan is bound by residues 80–81 and Glu89; that span reads IL. Substrate contacts are provided by Arg100, Lys186, and Tyr188. The L-tryptophan site is built by Tyr190 and Arg251. The substrate site is built by Arg264, Lys266, Tyr268, Gln350, Tyr352, Tyr416, and Tyr420.

The protein belongs to the tryptophan dimethylallyltransferase family. As to quaternary structure, homodimer.

The enzyme catalyses L-tryptophan + dimethylallyl diphosphate = 4-(3-methylbut-2-enyl)-L-tryptophan + diphosphate. The protein operates within alkaloid biosynthesis; ergot alkaloid biosynthesis. Functionally, catalyzes the first step of ergot alkaloid biosynthesis. Ergot alkaloids, which are produced by endophyte fungi, can enhance plant host fitness, but also cause livestock toxicosis to host plants. In Epichloe coenophiala (Tall fescue endophyte fungus), this protein is Tryptophan dimethylallyltransferase 1 (dmaW1).